Consider the following 366-residue polypeptide: E3 ubiquitin-protein ligase SINA-like 1 (366 aa).

A disordered region spans residues 1-37 (MVKGTNAEQALAREEASSSRPKRQRVPSIVEEEGENG). The segment at 56-92 (CPICCNALTIPIFQCDKGHIACSSCCTNVSNKCPYCS) adopts an RING-type; degenerate zinc-finger fold. The SBD stretch occupies residues 106-354 (VVEAFIVRCP…KGTYICIRSL (249 aa)). The SIAH-type; degenerate zinc finger occupies 109 to 232 (AFIVRCPIVA…LYSHYAANHK (124 aa)). 8 residues coordinate Zn(2+): cysteine 114, cysteine 186, histidine 198, cysteine 202, cysteine 209, cysteine 214, histidine 226, and histidine 231.

Belongs to the SINA (Seven in absentia) family.

The catalysed reaction is S-ubiquitinyl-[E2 ubiquitin-conjugating enzyme]-L-cysteine + [acceptor protein]-L-lysine = [E2 ubiquitin-conjugating enzyme]-L-cysteine + N(6)-ubiquitinyl-[acceptor protein]-L-lysine.. It participates in protein modification; protein ubiquitination. E3 ubiquitin-protein ligase that mediates ubiquitination and subsequent proteasomal degradation of target proteins. E3 ubiquitin ligases accept ubiquitin from an E2 ubiquitin-conjugating enzyme in the form of a thioester and then directly transfers the ubiquitin to targeted substrates. It probably triggers the ubiquitin-mediated degradation of different substrates. The protein is E3 ubiquitin-protein ligase SINA-like 1 of Arabidopsis thaliana (Mouse-ear cress).